Consider the following 254-residue polypeptide: uncharacterized protein (254 aa).

It belongs to the MtxX family.

This is an uncharacterized protein from Methanopyrus kandleri (strain AV19 / DSM 6324 / JCM 9639 / NBRC 100938).